Reading from the N-terminus, the 93-residue chain is Cell division topological specificity factor (93 aa).

Belongs to the MinE family.

Functionally, prevents the cell division inhibition by proteins MinC and MinD at internal division sites while permitting inhibition at polar sites. This ensures cell division at the proper site by restricting the formation of a division septum at the midpoint of the long axis of the cell. The polypeptide is Cell division topological specificity factor (Alkaliphilus oremlandii (strain OhILAs) (Clostridium oremlandii (strain OhILAs))).